A 422-amino-acid polypeptide reads, in one-letter code: Chorismate synthase (422 aa).

Arginine 43 and arginine 49 together coordinate NADP(+). FMN-binding positions include 143–145 (RSS), 264–265 (QA), glycine 309, 324–328 (KPIST), and arginine 350.

This sequence belongs to the chorismate synthase family. Homotetramer. Requires FMNH2 as cofactor.

It catalyses the reaction 5-O-(1-carboxyvinyl)-3-phosphoshikimate = chorismate + phosphate. The protein operates within metabolic intermediate biosynthesis; chorismate biosynthesis; chorismate from D-erythrose 4-phosphate and phosphoenolpyruvate: step 7/7. Functionally, catalyzes the anti-1,4-elimination of the C-3 phosphate and the C-6 proR hydrogen from 5-enolpyruvylshikimate-3-phosphate (EPSP) to yield chorismate, which is the branch point compound that serves as the starting substrate for the three terminal pathways of aromatic amino acid biosynthesis. This reaction introduces a second double bond into the aromatic ring system. The sequence is that of Chorismate synthase from Corynebacterium jeikeium (strain K411).